A 110-amino-acid polypeptide reads, in one-letter code: Ribonuclease P protein component (110 aa).

Belongs to the RnpA family. In terms of assembly, consists of a catalytic RNA component (M1 or rnpB) and a protein subunit.

It carries out the reaction Endonucleolytic cleavage of RNA, removing 5'-extranucleotides from tRNA precursor.. Its function is as follows. RNaseP catalyzes the removal of the 5'-leader sequence from pre-tRNA to produce the mature 5'-terminus. It can also cleave other RNA substrates such as 4.5S RNA. The protein component plays an auxiliary but essential role in vivo by binding to the 5'-leader sequence and broadening the substrate specificity of the ribozyme. This is Ribonuclease P protein component from Mesorhizobium japonicum (strain LMG 29417 / CECT 9101 / MAFF 303099) (Mesorhizobium loti (strain MAFF 303099)).